Here is a 148-residue protein sequence, read N- to C-terminus: Large ribosomal subunit protein uL11 (148 aa).

Residues 89 to 108 (EKKKGSGAHKPGKEKVGQVT) are disordered.

It belongs to the universal ribosomal protein uL11 family. In terms of assembly, part of the ribosomal stalk of the 50S ribosomal subunit. Interacts with L10 and the large rRNA to form the base of the stalk. L10 forms an elongated spine to which L12 dimers bind in a sequential fashion forming a multimeric L10(L12)X complex. Post-translationally, one or more lysine residues are methylated.

Forms part of the ribosomal stalk which helps the ribosome interact with GTP-bound translation factors. The sequence is that of Large ribosomal subunit protein uL11 from Anaeromyxobacter dehalogenans (strain 2CP-1 / ATCC BAA-258).